Here is a 349-residue protein sequence, read N- to C-terminus: D-alanine--D-alanine ligase (349 aa).

One can recognise an ATP-grasp domain in the interval Lys-132 to Asp-335. Val-162–Glu-217 serves as a coordination point for ATP. Mg(2+) is bound by residues Asp-289, Glu-302, and Asn-304.

It belongs to the D-alanine--D-alanine ligase family. Mg(2+) serves as cofactor. It depends on Mn(2+) as a cofactor.

The protein resides in the cytoplasm. The enzyme catalyses 2 D-alanine + ATP = D-alanyl-D-alanine + ADP + phosphate + H(+). Its pathway is cell wall biogenesis; peptidoglycan biosynthesis. Its function is as follows. Cell wall formation. The chain is D-alanine--D-alanine ligase from Lactococcus lactis subsp. cremoris (strain MG1363).